Reading from the N-terminus, the 282-residue chain is Purine nucleoside phosphorylase (282 aa).

Phosphate is bound by residues serine 46, histidine 78, and 103–105 (RTH). Glutamate 204 is a catalytic residue. Glutamate 204 lines the a purine D-ribonucleoside pocket. Serine 223 contributes to the phosphate binding site. Residue asparagine 246 participates in a purine D-ribonucleoside binding.

This sequence belongs to the PNP/MTAP phosphorylase family. In terms of assembly, homotrimer.

It catalyses the reaction a purine 2'-deoxy-D-ribonucleoside + phosphate = a purine nucleobase + 2-deoxy-alpha-D-ribose 1-phosphate. It participates in purine metabolism; purine nucleoside salvage. The purine nucleoside phosphorylases catalyze the phosphorolytic breakdown of the N-glycosidic bond in the beta-(deoxy)ribonucleoside molecules, with the formation of the corresponding free purine bases and pentose-1-phosphate. Cleaves guanosine, inosine, 2'-deoxyguanosine and 2'-deoxyinosine. In Cellulomonas sp, this protein is Purine nucleoside phosphorylase (punA).